Reading from the N-terminus, the 439-residue chain is Putative phosphatidate cytidylyltransferase (439 aa).

The tract at residues 1-37 (MARKRTNKRNNSDKENGNVGVVQNKDSASSKTTEPAR) is disordered. Serine 12 is subject to Phosphoserine. Over residues 24-33 (NKDSASSKTT) the composition is skewed to polar residues. 7 consecutive transmembrane segments (helical) span residues 52–71 (FITR…TALA), 76–98 (WVVL…IASV), 110–130 (FINW…SIYA), 145–165 (LVLH…VLFV), 180–199 (FCWT…FMIN), 245–265 (GFLG…YVLM), and 321–341 (FHLA…GFFA).

Belongs to the CDS family. Mg(2+) is required as a cofactor.

The protein localises to the endoplasmic reticulum membrane. The enzyme catalyses a 1,2-diacyl-sn-glycero-3-phosphate + CTP + H(+) = a CDP-1,2-diacyl-sn-glycerol + diphosphate. It participates in phospholipid metabolism; CDP-diacylglycerol biosynthesis; CDP-diacylglycerol from sn-glycerol 3-phosphate: step 3/3. Its function is as follows. Supplies CDP-diacylglycerol, which may play an important role as both a precursor to phosphoinositide biosynthesis in the plasma membrane and as a negative effector of phosphatidylinositol 4-kinase activity, thereby exerting an effect on cell proliferation via a lipid-dependent signal transduction cascade. The polypeptide is Putative phosphatidate cytidylyltransferase (Schizosaccharomyces pombe (strain 972 / ATCC 24843) (Fission yeast)).